We begin with the raw amino-acid sequence, 394 residues long: Elongation factor Tu (394 aa).

One can recognise a tr-type G domain in the interval 10-204 (KPHVNVGTIG…FLDSYIPEPE (195 aa)). A G1 region spans residues 19-26 (GHVDHGKT). 19–26 (GHVDHGKT) is a GTP binding site. A Mg(2+)-binding site is contributed by Thr26. A G2 region spans residues 60-64 (GITIN). The G3 stretch occupies residues 81–84 (DCPG). GTP is bound by residues 81 to 85 (DCPGH) and 136 to 139 (NKCD). The tract at residues 136-139 (NKCD) is G4. The G5 stretch occupies residues 174 to 176 (SAL).

It belongs to the TRAFAC class translation factor GTPase superfamily. Classic translation factor GTPase family. EF-Tu/EF-1A subfamily. As to quaternary structure, monomer.

The protein resides in the cytoplasm. It carries out the reaction GTP + H2O = GDP + phosphate + H(+). Functionally, GTP hydrolase that promotes the GTP-dependent binding of aminoacyl-tRNA to the A-site of ribosomes during protein biosynthesis. This is Elongation factor Tu from Salmonella arizonae (strain ATCC BAA-731 / CDC346-86 / RSK2980).